A 77-amino-acid chain; its full sequence is Protein IDA (77 aa).

Residues 1–26 (MAPCRTMMVLLCFVLFLAASSSCVAA) form the signal peptide. The tract at residues 56–69 (GVPIPPSAPSKRHN) is RLK5-binding.

Interaction with RLK5. Expressed specifically in the floral abscission zone.

It is found in the secreted. The protein resides in the extracellular space. Functionally, involved in an ethylene-independent separation step of floral abscission. Promotes abscission zone (AZ) cells rounding. May act with RLK5 and HSL2 as ligand-receptor pairs. The chain is Protein IDA from Arabidopsis thaliana (Mouse-ear cress).